The chain runs to 313 residues: Porphobilinogen deaminase (313 aa).

Cysteine 241 is subject to S-(dipyrrolylmethanemethyl)cysteine.

The protein belongs to the HMBS family. As to quaternary structure, monomer. Dipyrromethane is required as a cofactor.

It catalyses the reaction 4 porphobilinogen + H2O = hydroxymethylbilane + 4 NH4(+). It participates in porphyrin-containing compound metabolism; protoporphyrin-IX biosynthesis; coproporphyrinogen-III from 5-aminolevulinate: step 2/4. The protein operates within porphyrin-containing compound metabolism; chlorophyll biosynthesis. Its function is as follows. Tetrapolymerization of the monopyrrole PBG into the hydroxymethylbilane pre-uroporphyrinogen in several discrete steps. This Chlorobium luteolum (strain DSM 273 / BCRC 81028 / 2530) (Pelodictyon luteolum) protein is Porphobilinogen deaminase.